The primary structure comprises 96 residues: Probable quinol oxidase subunit 4 (96 aa).

A run of 3 helical transmembrane segments spans residues 8 to 28 (TVGFIASIVLTLLAVFVTLYT), 36 to 56 (VTIIFGFAFIQAALQLLMFMH), and 68 to 88 (FKVIFAIIITLVTVIGTYWVM).

This sequence belongs to the cytochrome c oxidase bacterial subunit 4 family.

The protein resides in the cell membrane. It carries out the reaction 2 a quinol + O2 = 2 a quinone + 2 H2O. Its function is as follows. Catalyzes quinol oxidation with the concomitant reduction of oxygen to water. This Staphylococcus epidermidis (strain ATCC 35984 / DSM 28319 / BCRC 17069 / CCUG 31568 / BM 3577 / RP62A) protein is Probable quinol oxidase subunit 4 (qoxD).